The sequence spans 1209 residues: Limbin (1209 aa).

The Extracellular segment spans residues 1 to 200 (MKFSKEIEVF…VLPNHGLHAA (200 aa)). Residue N120 is glycosylated (N-linked (GlcNAc...) asparagine). The chain crosses the membrane as a helical span at residues 201–221 (GFCVAFILSLVLTWAVLFFMV). Over 222 to 1209 (RYQCVKGSSL…KKAAWALGLN (988 aa)) the chain is Cytoplasmic. 3 coiled-coil regions span residues 355-394 (TAEC…SAVE), 553-697 (KQKL…EERD), and 920-1012 (ELQE…METD). Residues 689–700 (ERLEGEERDRGQ) are compositionally biased toward basic and acidic residues. A disordered region spans residues 689–714 (ERLEGEERDRGQEGVQSVRQRLKDDA).

In terms of assembly, component of the EvC complex composed of EFCAB7, IQCE, EVC2 and EVC; built from two subcomplexes, EVC2:EVC and EFCAB7:IQCE. Interacts with EVC. Interacts (via N-terminal end) with EFCAB7. Interacts (via N-terminal end) with IQCE.

It localises to the cell membrane. It is found in the cytoplasm. The protein localises to the cytoskeleton. The protein resides in the cilium basal body. Its subcellular location is the cell projection. It localises to the cilium. It is found in the cilium membrane. The protein localises to the nucleus. In terms of biological role, component of the EvC complex that positively regulates ciliary Hedgehog (Hh) signaling. Plays a critical role in bone formation and skeletal development. May be involved in early embryonic morphogenesis. This chain is Limbin (EVC2), found in Bos taurus (Bovine).